Here is a 165-residue protein sequence, read N- to C-terminus: Phosphopantetheine adenylyltransferase (165 aa).

Ser10 is a substrate binding site. ATP contacts are provided by residues 10–11 (SF) and His18. The substrate site is built by Lys42, Thr79, and Arg93. ATP is bound by residues 94-96 (GLR), Glu104, and 129-135 (VRPITAT).

It belongs to the bacterial CoaD family. Homohexamer. The cofactor is Mg(2+).

It is found in the cytoplasm. It catalyses the reaction (R)-4'-phosphopantetheine + ATP + H(+) = 3'-dephospho-CoA + diphosphate. It participates in cofactor biosynthesis; coenzyme A biosynthesis; CoA from (R)-pantothenate: step 4/5. In terms of biological role, reversibly transfers an adenylyl group from ATP to 4'-phosphopantetheine, yielding dephospho-CoA (dPCoA) and pyrophosphate. This is Phosphopantetheine adenylyltransferase from Rhodopseudomonas palustris (strain HaA2).